The chain runs to 217 residues: Adenylate kinase (217 aa).

10–15 is a binding site for ATP; it reads GGGKGT. The interval 30 to 59 is NMP; the sequence is STGDMLRAAVASGSEVGKKAKAVMDAGQLV. Residues threonine 31, arginine 36, 57–59, 85–88, and glutamine 92 contribute to the AMP site; these read QLV and GFPR. An LID region spans residues 126–164; that stretch reads GRYTCAKCGAGYHDKFQLPQVAGKCDSCGGTEFARRPDD. Residue arginine 127 participates in ATP binding. Zn(2+) is bound by residues cysteine 130, cysteine 133, cysteine 150, and cysteine 153. AMP-binding residues include arginine 161 and arginine 172. An ATP-binding site is contributed by methionine 200.

It belongs to the adenylate kinase family. As to quaternary structure, monomer.

The protein localises to the cytoplasm. The catalysed reaction is AMP + ATP = 2 ADP. Its pathway is purine metabolism; AMP biosynthesis via salvage pathway; AMP from ADP: step 1/1. Functionally, catalyzes the reversible transfer of the terminal phosphate group between ATP and AMP. Plays an important role in cellular energy homeostasis and in adenine nucleotide metabolism. The sequence is that of Adenylate kinase from Paramagnetospirillum magneticum (strain ATCC 700264 / AMB-1) (Magnetospirillum magneticum).